Consider the following 66-residue polypeptide: Large ribosomal subunit protein bL33c (66 aa).

Belongs to the bacterial ribosomal protein bL33 family.

It is found in the plastid. The protein resides in the chloroplast. This is Large ribosomal subunit protein bL33c from Fagopyrum esculentum subsp. ancestrale (Wild buckwheat).